The chain runs to 626 residues: MHYPKVYDVIVIGGGHAGTEAALAAARMGRQTLLLTHNIETLGQMSCNPAIGGIGKSHLVREIDALGGAMALAADKGGIQFRILNSRKGAAVRATRAQADRVRYKAAIRETLENQANLDIFQQAADDLIVEGDTVKGVVTQMGIRFDAKTVVLTTGTFLGGVIHVGLEKSSGGRAGDPPSIALAQRLRELKLPVGRLKTGTPPRIDARSVDFSVMTPQPGDFPSPVMSFMGDVSMHPEQVNCYITHTNEKTHDIIRGGLDRSPMYTGVIEGVGPRYCPSIEDKIHRFSDKDSHQVFLEPEGLDTHELYPNGISTSLPFDVQFELVRSIRGMENAHILRPGYAIEYDYFNPQALKFTLETKAINGLYFAGQINGTTGYEEAGAQGLLAGLNAARRAWEQEEWTPKRDQAYMGVLVDDLITLGTKEPYRMFTSRAEYRLMLREDNADQRLTTIGRELGLVDDVRWAAYCEKMEAVERETSRLQHVWAAPNNPMGKKFVEMTGADLSKECSAIDLLKRPNINFGQIAELTGSEVSQQVGEQIEIAVKYEGYINRQHEDVAQLKRLEETKIPADFDYDVVSGLSREITQKLKTVRPETLAQASRIPGVTPAAVQLVMITIRKNNMTKKTA.

An FAD-binding site is contributed by 13 to 18 (GGGHAG). 273–287 (GPRYCPSIEDKIHRF) contributes to the NAD(+) binding site.

This sequence belongs to the MnmG family. In terms of assembly, homodimer. Heterotetramer of two MnmE and two MnmG subunits. FAD is required as a cofactor.

The protein localises to the cytoplasm. In terms of biological role, NAD-binding protein involved in the addition of a carboxymethylaminomethyl (cmnm) group at the wobble position (U34) of certain tRNAs, forming tRNA-cmnm(5)s(2)U34. In Acinetobacter baumannii (strain AB307-0294), this protein is tRNA uridine 5-carboxymethylaminomethyl modification enzyme MnmG.